A 178-amino-acid chain; its full sequence is MFASRPAVHPVEAPPPPDPAEQPRGVLMKDLPGMPGTAGGLGLRLAQFAFAAVALAVMASTNDFPSVTSFCFLVAAAILQCLWSFSLAIVDIYALLVKRCLRNRRAVCLFAIGDGITAALTFSAACASSGITVLIDNDLDLCSENHCASFESATAMAFLSWFALSPSFLLNFWSMASG.

Residues 1-11 are compositionally biased toward low complexity; that stretch reads MFASRPAVHPV. The disordered stretch occupies residues 1–25; sequence MFASRPAVHPVEAPPPPDPAEQPRG. The Cytoplasmic segment spans residues 1–37; sequence MFASRPAVHPVEAPPPPDPAEQPRGVLMKDLPGMPGT. The chain crosses the membrane as a helical span at residues 38–58; that stretch reads AGGLGLRLAQFAFAAVALAVM. Residues 59-69 lie on the Extracellular side of the membrane; the sequence is ASTNDFPSVTS. A helical transmembrane segment spans residues 70 to 90; sequence FCFLVAAAILQCLWSFSLAIV. The Cytoplasmic segment spans residues 91-105; it reads DIYALLVKRCLRNRR. A helical transmembrane segment spans residues 106–126; sequence AVCLFAIGDGITAALTFSAAC. Over 127 to 152 the chain is Extracellular; that stretch reads ASSGITVLIDNDLDLCSENHCASFES. Residues 153–173 traverse the membrane as a helical segment; it reads ATAMAFLSWFALSPSFLLNFW. At 174–178 the chain is on the cytoplasmic side; the sequence is SMASG.

The protein belongs to the Casparian strip membrane proteins (CASP) family. As to quaternary structure, homodimer and heterodimers.

It is found in the cell membrane. This is CASP-like protein 5A1 from Oryza sativa subsp. japonica (Rice).